A 136-amino-acid chain; its full sequence is Transmembrane protein 203 (136 aa).

4 consecutive transmembrane segments (helical) span residues 14 to 34 (FAQL…VLLA), 50 to 72 (FIPF…VRLF), 81 to 101 (VLRL…EMLL), and 112 to 132 (LWYG…MIRA).

It is found in the endoplasmic reticulum membrane. The protein resides in the endoplasmic reticulum-Golgi intermediate compartment. Its function is as follows. Involved in the regulation of cellular calcium homeotasis. May act as a regulator of STING-mediated inflammatory signaling in macrophages. This Xenopus laevis (African clawed frog) protein is Transmembrane protein 203 (tmem203).